The primary structure comprises 310 residues: tRNA dimethylallyltransferase (310 aa).

Residue 14–21 (GPTASGKS) participates in ATP binding. 16–21 (TASGKS) is a substrate binding site. 2 interaction with substrate tRNA regions span residues 39 to 42 (DSMQ) and 163 to 167 (QRIVR).

The protein belongs to the IPP transferase family. As to quaternary structure, monomer. Mg(2+) serves as cofactor.

The catalysed reaction is adenosine(37) in tRNA + dimethylallyl diphosphate = N(6)-dimethylallyladenosine(37) in tRNA + diphosphate. Its function is as follows. Catalyzes the transfer of a dimethylallyl group onto the adenine at position 37 in tRNAs that read codons beginning with uridine, leading to the formation of N6-(dimethylallyl)adenosine (i(6)A). This is tRNA dimethylallyltransferase from Brucella ovis (strain ATCC 25840 / 63/290 / NCTC 10512).